Here is a 198-residue protein sequence, read N- to C-terminus: Endothelin-3 (198 aa).

The N-terminal stretch at 1–16 is a signal peptide; sequence MEPGLWLLFGLTVTSA. The propeptide occupies 17–86; that stretch reads AGLVPCPQPG…SKGGPVHGRA (70 aa). Residues 22–79 are disordered; sequence CPQPGDAGKSGVPGTPPTARSEGDIQEPVAMTAVQGPSPRSPEQEQELGRFGEQASKG. 2 disulfide bridges follow: Cys89–Cys103 and Cys91–Cys99. Residues 110–198 constitute a propeptide that is removed on maturation; the sequence is INTPEQTVPY…RGNGGLRPTR (89 aa). The segment at 150 to 164 is endothelin-like; it reads CACVQSQDSACLHFC. The segment at 174 to 198 is disordered; the sequence is SRTATNPDKEEEPASRGNGGLRPTR.

It belongs to the endothelin/sarafotoxin family. In terms of tissue distribution, expressed in which included heart, lung, liver, kidney, spleen, stomach, pancreas, duodenum, colon, uterus, ovary and testis.

The protein resides in the secreted. Its function is as follows. Endothelins are endothelium-derived vasoconstrictor peptides. This Canis lupus familiaris (Dog) protein is Endothelin-3 (EDN3).